The sequence spans 412 residues: FAD-dependent monooxygenase nscC (412 aa).

A signal peptide spans 1–21; sequence MGKQQETILIIGAGISGLATS. E35 and A46 together coordinate FAD. N-linked (GlcNAc...) asparagine glycosylation is present at N92. An FAD-binding site is contributed by R119. N-linked (GlcNAc...) asparagine glycans are attached at residues N170 and N231. The FAD site is built by D326 and G339.

It belongs to the paxM FAD-dependent monooxygenase family. It depends on FAD as a cofactor.

It participates in secondary metabolite biosynthesis. Its function is as follows. FAD-dependent monooxygenase; part of the gene cluster that mediates the biosynthesis of neosartoricin B, a prenylated anthracenone that probably exhibits T-cell antiproliferative activity, suggestive of a physiological role as an immunosuppressive agent. The non-reducing polyketide synthase nscA probably synthesizes and cyclizes the decaketide backbone. The hydrolase nscB then mediates the product release through hydrolysis followed by spontaneous decarboxylation. The prenyltransferase nscD catalyzes the addition of the dimethylallyl group to the aromatic C5. The FAD-dependent monooxygenase nscC is then responsible for the stereospecific hydroxylation at C2. Neosartoricin B can be converted into two additional compounds neosartoricins C and D. Neosartoricin C is a spirocyclic compound that is cyclized through the attack of C3 hydroxyl on C14, followed by dehydration. On the other hand, neosartoricin D is a further cyclized compound in which attack of C2 on C14 in neosartoricin C results in the formation of the acetal-containing dioxabicyclo-octanone ring. Both of these compounds are novel and possibly represent related metabolites of the gene cluster. The chain is FAD-dependent monooxygenase nscC from Trichophyton tonsurans (strain CBS 112818) (Scalp ringworm fungus).